The sequence spans 157 residues: DNA gyrase inhibitor (157 aa).

Belongs to the DNA gyrase inhibitor family. As to quaternary structure, interacts with DNA gyrase.

Its subcellular location is the cytoplasm. Functionally, inhibits the supercoiling activity of DNA gyrase. Acts by inhibiting DNA gyrase at an early step, prior to (or at the step of) binding of DNA by the gyrase. It protects cells against toxins that target DNA gyrase, by inhibiting activity of these toxins and reducing the formation of lethal double-strand breaks in the cell. The sequence is that of DNA gyrase inhibitor from Enterobacter lignolyticus (strain SCF1).